The chain runs to 312 residues: Lipoyl synthase (312 aa).

Cysteine 51, cysteine 56, cysteine 62, cysteine 77, cysteine 81, cysteine 84, and serine 290 together coordinate [4Fe-4S] cluster. The 218-residue stretch at 63-280 folds into the Radical SAM core domain; sequence WSRKTATYLA…RTIGTSLGLF (218 aa).

This sequence belongs to the radical SAM superfamily. Lipoyl synthase family. Requires [4Fe-4S] cluster as cofactor.

It is found in the cytoplasm. It carries out the reaction [[Fe-S] cluster scaffold protein carrying a second [4Fe-4S](2+) cluster] + N(6)-octanoyl-L-lysyl-[protein] + 2 oxidized [2Fe-2S]-[ferredoxin] + 2 S-adenosyl-L-methionine + 4 H(+) = [[Fe-S] cluster scaffold protein] + N(6)-[(R)-dihydrolipoyl]-L-lysyl-[protein] + 4 Fe(3+) + 2 hydrogen sulfide + 2 5'-deoxyadenosine + 2 L-methionine + 2 reduced [2Fe-2S]-[ferredoxin]. It functions in the pathway protein modification; protein lipoylation via endogenous pathway; protein N(6)-(lipoyl)lysine from octanoyl-[acyl-carrier-protein]: step 2/2. Its function is as follows. Catalyzes the radical-mediated insertion of two sulfur atoms into the C-6 and C-8 positions of the octanoyl moiety bound to the lipoyl domains of lipoate-dependent enzymes, thereby converting the octanoylated domains into lipoylated derivatives. This is Lipoyl synthase from Chlamydia caviae (strain ATCC VR-813 / DSM 19441 / 03DC25 / GPIC) (Chlamydophila caviae).